Consider the following 151-residue polypeptide: Small ribosomal subunit protein uS15 (151 aa).

The protein belongs to the universal ribosomal protein uS15 family.

This chain is Small ribosomal subunit protein uS15 (RpS13), found in Choristoneura parallela (Spotted fireworm moth).